The following is a 150-amino-acid chain: Cytochrome c oxidase subunit 5A, mitochondrial (150 aa).

The N-terminal 41 residues, 1-41 (MLGAALRRCAVAATTWAGPRGLLHSARTPGPAAAIQSVRCY), are a transit peptide targeting the mitochondrion. Positions 2–17 (LGAALRRCAVAATTWA) match the SIFI-degron motif. N6-acetyllysine is present on residues Lys-87 and Lys-113. A Phosphothreonine modification is found at Thr-141.

Belongs to the cytochrome c oxidase subunit 5A family. In terms of assembly, component of the cytochrome c oxidase (complex IV, CIV), a multisubunit enzyme composed of 14 subunits. The complex is composed of a catalytic core of 3 subunits MT-CO1, MT-CO2 and MT-CO3, encoded in the mitochondrial DNA, and 11 supernumerary subunits COX4I, COX5A, COX5B, COX6A, COX6B, COX6C, COX7A, COX7B, COX7C, COX8 and NDUFA4, which are encoded in the nuclear genome. The complex exists as a monomer or a dimer and forms supercomplexes (SCs) in the inner mitochondrial membrane with NADH-ubiquinone oxidoreductase (complex I, CI) and ubiquinol-cytochrome c oxidoreductase (cytochrome b-c1 complex, complex III, CIII), resulting in different assemblies (supercomplex SCI(1)III(2)IV(1) and megacomplex MCI(2)III(2)IV(2)). Interacts with AFG1L. Interacts with RAB5IF. In response to mitochondrial stress, the precursor protein is ubiquitinated by the SIFI complex in the cytoplasm before mitochondrial import, leading to its degradation. Within the SIFI complex, UBR4 initiates ubiquitin chain that are further elongated or branched by KCMF1.

Its subcellular location is the mitochondrion inner membrane. It participates in energy metabolism; oxidative phosphorylation. Component of the cytochrome c oxidase, the last enzyme in the mitochondrial electron transport chain which drives oxidative phosphorylation. The respiratory chain contains 3 multisubunit complexes succinate dehydrogenase (complex II, CII), ubiquinol-cytochrome c oxidoreductase (cytochrome b-c1 complex, complex III, CIII) and cytochrome c oxidase (complex IV, CIV), that cooperate to transfer electrons derived from NADH and succinate to molecular oxygen, creating an electrochemical gradient over the inner membrane that drives transmembrane transport and the ATP synthase. Cytochrome c oxidase is the component of the respiratory chain that catalyzes the reduction of oxygen to water. Electrons originating from reduced cytochrome c in the intermembrane space (IMS) are transferred via the dinuclear copper A center (CU(A)) of subunit 2 and heme A of subunit 1 to the active site in subunit 1, a binuclear center (BNC) formed by heme A3 and copper B (CU(B)). The BNC reduces molecular oxygen to 2 water molecules using 4 electrons from cytochrome c in the IMS and 4 protons from the mitochondrial matrix. The polypeptide is Cytochrome c oxidase subunit 5A, mitochondrial (COX5A) (Papio anubis (Olive baboon)).